Reading from the N-terminus, the 559-residue chain is Dihydroxy-acid dehydratase (559 aa).

Aspartate 81 is a binding site for Mg(2+). Residue cysteine 122 coordinates [2Fe-2S] cluster. 2 residues coordinate Mg(2+): aspartate 123 and lysine 124. Lysine 124 is modified (N6-carboxylysine). A [2Fe-2S] cluster-binding site is contributed by cysteine 195. Glutamate 448 contributes to the Mg(2+) binding site. The active-site Proton acceptor is serine 474.

Belongs to the IlvD/Edd family. Homodimer. [2Fe-2S] cluster is required as a cofactor. The cofactor is Mg(2+).

The catalysed reaction is (2R)-2,3-dihydroxy-3-methylbutanoate = 3-methyl-2-oxobutanoate + H2O. The enzyme catalyses (2R,3R)-2,3-dihydroxy-3-methylpentanoate = (S)-3-methyl-2-oxopentanoate + H2O. The protein operates within amino-acid biosynthesis; L-isoleucine biosynthesis; L-isoleucine from 2-oxobutanoate: step 3/4. It functions in the pathway amino-acid biosynthesis; L-valine biosynthesis; L-valine from pyruvate: step 3/4. Functionally, functions in the biosynthesis of branched-chain amino acids. Catalyzes the dehydration of (2R,3R)-2,3-dihydroxy-3-methylpentanoate (2,3-dihydroxy-3-methylvalerate) into 2-oxo-3-methylpentanoate (2-oxo-3-methylvalerate) and of (2R)-2,3-dihydroxy-3-methylbutanoate (2,3-dihydroxyisovalerate) into 2-oxo-3-methylbutanoate (2-oxoisovalerate), the penultimate precursor to L-isoleucine and L-valine, respectively. This Geobacillus kaustophilus (strain HTA426) protein is Dihydroxy-acid dehydratase.